We begin with the raw amino-acid sequence, 383 residues long: Succinyl-diaminopimelate desuccinylase (383 aa).

Histidine 70 provides a ligand contact to Zn(2+). The active site involves aspartate 72. Residue aspartate 103 participates in Zn(2+) binding. Glutamate 137 functions as the Proton acceptor in the catalytic mechanism. Residues glutamate 138, glutamate 166, and histidine 352 each contribute to the Zn(2+) site.

It belongs to the peptidase M20A family. DapE subfamily. As to quaternary structure, homodimer. Requires Zn(2+) as cofactor. The cofactor is Co(2+).

It carries out the reaction N-succinyl-(2S,6S)-2,6-diaminopimelate + H2O = (2S,6S)-2,6-diaminopimelate + succinate. It functions in the pathway amino-acid biosynthesis; L-lysine biosynthesis via DAP pathway; LL-2,6-diaminopimelate from (S)-tetrahydrodipicolinate (succinylase route): step 3/3. Catalyzes the hydrolysis of N-succinyl-L,L-diaminopimelic acid (SDAP), forming succinate and LL-2,6-diaminopimelate (DAP), an intermediate involved in the bacterial biosynthesis of lysine and meso-diaminopimelic acid, an essential component of bacterial cell walls. The protein is Succinyl-diaminopimelate desuccinylase of Hahella chejuensis (strain KCTC 2396).